We begin with the raw amino-acid sequence, 175 residues long: Endoribonuclease YbeY (175 aa).

Zn(2+)-binding residues include histidine 129, histidine 133, and histidine 139.

This sequence belongs to the endoribonuclease YbeY family. Zn(2+) is required as a cofactor.

It localises to the cytoplasm. Its function is as follows. Single strand-specific metallo-endoribonuclease involved in late-stage 70S ribosome quality control and in maturation of the 3' terminus of the 16S rRNA. The sequence is that of Endoribonuclease YbeY from Lactobacillus johnsonii (strain CNCM I-12250 / La1 / NCC 533).